Here is a 264-residue protein sequence, read N- to C-terminus: MHQYQDLLERILSDGAEKTDRTGTGTLSVFGHQMRFNLSAGFPMLTTKRLPLKAIVHELLWFLKGDTNIKYLRDNGVTIWDEWADANGDLGPVYGHQWRSWPAPDGRSIDQIANVVDMIKRNPDSRRLIVSAWNPAEVDKMALPPCHCLFQFYVANGKLSCQLYQRSADVFLGVPFNIASYALLTMMVAQVTGLKPGDFVHSFGDTHLYSNHLEQAKLQLTRAPRALPVMRINPDVKDIFSFRFEDFELVGYDPHPHIKAEVAV.

Residues R21 and 126–127 (RR) contribute to the dUMP site. Catalysis depends on C146, which acts as the Nucleophile. DUMP contacts are provided by residues 166-169 (RSAD), N177, and 207-209 (HLY). D169 is a binding site for (6R)-5,10-methylene-5,6,7,8-tetrahydrofolate. Position 263 (A263) interacts with (6R)-5,10-methylene-5,6,7,8-tetrahydrofolate.

This sequence belongs to the thymidylate synthase family. Bacterial-type ThyA subfamily. In terms of assembly, homodimer.

The protein resides in the cytoplasm. The catalysed reaction is dUMP + (6R)-5,10-methylene-5,6,7,8-tetrahydrofolate = 7,8-dihydrofolate + dTMP. It participates in pyrimidine metabolism; dTTP biosynthesis. Functionally, catalyzes the reductive methylation of 2'-deoxyuridine-5'-monophosphate (dUMP) to 2'-deoxythymidine-5'-monophosphate (dTMP) while utilizing 5,10-methylenetetrahydrofolate (mTHF) as the methyl donor and reductant in the reaction, yielding dihydrofolate (DHF) as a by-product. This enzymatic reaction provides an intracellular de novo source of dTMP, an essential precursor for DNA biosynthesis. The sequence is that of Thymidylate synthase from Bradyrhizobium diazoefficiens (strain JCM 10833 / BCRC 13528 / IAM 13628 / NBRC 14792 / USDA 110).